The primary structure comprises 138 residues: ATP synthase epsilon chain (138 aa).

It belongs to the ATPase epsilon chain family. As to quaternary structure, F-type ATPases have 2 components, CF(1) - the catalytic core - and CF(0) - the membrane proton channel. CF(1) has five subunits: alpha(3), beta(3), gamma(1), delta(1), epsilon(1). CF(0) has three main subunits: a, b and c.

It is found in the cell membrane. Its function is as follows. Produces ATP from ADP in the presence of a proton gradient across the membrane. The chain is ATP synthase epsilon chain from Streptococcus equi subsp. equi (strain 4047).